The following is a 54-amino-acid chain: Large ribosomal subunit protein bL33 (54 aa).

It belongs to the bacterial ribosomal protein bL33 family.

The polypeptide is Large ribosomal subunit protein bL33 (Legionella pneumophila (strain Lens)).